The sequence spans 302 residues: Sulfate adenylyltransferase subunit 2 (302 aa).

The disordered stretch occupies residues 280–302 (RQGRLIDSDQSASMEQKKRQGYF).

Belongs to the PAPS reductase family. CysD subfamily. In terms of assembly, heterodimer composed of CysD, the smaller subunit, and CysN.

It catalyses the reaction sulfate + ATP + H(+) = adenosine 5'-phosphosulfate + diphosphate. Its pathway is sulfur metabolism; hydrogen sulfide biosynthesis; sulfite from sulfate: step 1/3. In terms of biological role, with CysN forms the ATP sulfurylase (ATPS) that catalyzes the adenylation of sulfate producing adenosine 5'-phosphosulfate (APS) and diphosphate, the first enzymatic step in sulfur assimilation pathway. APS synthesis involves the formation of a high-energy phosphoric-sulfuric acid anhydride bond driven by GTP hydrolysis by CysN coupled to ATP hydrolysis by CysD. The protein is Sulfate adenylyltransferase subunit 2 of Shewanella putrefaciens (strain CN-32 / ATCC BAA-453).